The chain runs to 455 residues: Putative FBD-associated F-box protein At5g56400 (455 aa).

The F-box domain maps to 32–81 (VDKISDLPEDLLVHILSLLPTTNDIVATSGVSKRWESLWTKVHKLRFNDR). Residues 372-421 (WNQQPSYVPECLTKSLEIFEWRNYKATFRERDVAVYILKNSTCLKKTVIS) form the FBD domain.

In Arabidopsis thaliana (Mouse-ear cress), this protein is Putative FBD-associated F-box protein At5g56400.